A 508-amino-acid polypeptide reads, in one-letter code: Steroid 17-alpha-hydroxylase/17,20 lyase (508 aa).

Position 442 (cysteine 442) interacts with heme.

Belongs to the cytochrome P450 family. Heme is required as a cofactor.

Its subcellular location is the endoplasmic reticulum membrane. It is found in the microsome membrane. It catalyses the reaction a C21-steroid + reduced [NADPH--hemoprotein reductase] + O2 = a 17alpha-hydroxy-C21-steroid + oxidized [NADPH--hemoprotein reductase] + H2O + H(+). It carries out the reaction progesterone + reduced [NADPH--hemoprotein reductase] + O2 = 17alpha-hydroxyprogesterone + oxidized [NADPH--hemoprotein reductase] + H2O + H(+). The catalysed reaction is pregnenolone + reduced [NADPH--hemoprotein reductase] + O2 = 17alpha-hydroxypregnenolone + oxidized [NADPH--hemoprotein reductase] + H2O + H(+). The enzyme catalyses 17alpha-hydroxyprogesterone + reduced [NADPH--hemoprotein reductase] + O2 = androst-4-ene-3,17-dione + acetate + oxidized [NADPH--hemoprotein reductase] + H2O + 2 H(+). It catalyses the reaction 17alpha-hydroxyprogesterone + reduced [NADPH--hemoprotein reductase] + O2 = 16alpha,17alpha-dihydroxyprogesterone + oxidized [NADPH--hemoprotein reductase] + H2O + H(+). It carries out the reaction 16alpha,17alpha-dihydroxyprogesterone + reduced [NADPH--hemoprotein reductase] + O2 = 6beta,16alpha,17alpha-trihydroxyprogesterone + oxidized [NADPH--hemoprotein reductase] + H2O + H(+). The catalysed reaction is 17alpha-hydroxypregnenolone + reduced [NADPH--hemoprotein reductase] + O2 = 3beta-hydroxyandrost-5-en-17-one + acetate + oxidized [NADPH--hemoprotein reductase] + H2O + 2 H(+). The enzyme catalyses 16alpha,17alpha-dihydroxypregnenolone + reduced [NADPH--hemoprotein reductase] + O2 = 3beta,16alpha-dihydroxy-androst-5-en-17-one + acetate + oxidized [NADPH--hemoprotein reductase] + H2O + 2 H(+). It catalyses the reaction 3beta-hydroxyandrost-5-en-17-one + reduced [NADPH--hemoprotein reductase] + O2 = 3beta,16alpha-dihydroxy-androst-5-en-17-one + oxidized [NADPH--hemoprotein reductase] + H2O + H(+). It carries out the reaction androst-4-ene-3,17-dione + reduced [NADPH--hemoprotein reductase] + O2 = 16alpha-hydroxyandrost-4-ene-3,17-dione + oxidized [NADPH--hemoprotein reductase] + H2O + H(+). It functions in the pathway steroid hormone biosynthesis. It participates in steroid biosynthesis; glucocorticoid biosynthesis. Its activity is regulated as follows. Regulated predominantly by intracellular cAMP levels. The 17,20-lyase activity is stimulated by cytochrome b5, which acts as an allosteric effector increasing the Vmax of the lyase activity. In terms of biological role, a cytochrome P450 monooxygenase involved in corticoid and androgen biosynthesis. Catalyzes 17-alpha hydroxylation of C21 steroids, which is common for both pathways. A second oxidative step, required only for androgen synthesis, involves an acyl-carbon cleavage. The 17-alpha hydroxy intermediates, as part of adrenal glucocorticoids biosynthesis pathway, are precursors of cortisol. Hydroxylates steroid hormones, pregnenolone and progesterone to form 17-alpha hydroxy metabolites, followed by the cleavage of the C17-C20 bond to form C19 steroids, dehydroepiandrosterone (DHEA) and androstenedione. Has 16-alpha hydroxylase activity. Catalyzes 16-alpha hydroxylation of 17-alpha hydroxy pregnenolone, followed by the cleavage of the C17-C20 bond to form 16-alpha-hydroxy DHEA. Also 16-alpha hydroxylates androgens, relevant for estriol synthesis. Mechanistically, uses molecular oxygen inserting one oxygen atom into a substrate, and reducing the second into a water molecule, with two electrons provided by NADPH via cytochrome P450 reductase (CPR; NADPH-ferrihemoprotein reductase). In Cavia porcellus (Guinea pig), this protein is Steroid 17-alpha-hydroxylase/17,20 lyase (CYP17A1).